Reading from the N-terminus, the 392-residue chain is Integrin-linked kinase-associated serine/threonine phosphatase 2C (392 aa).

The residue at position 1 (Met1) is an N-acetylmethionine. Positions 1 to 91 (MDLFGDLPEP…PEEEKNGGEE (91 aa)) are disordered. A compositionally biased stretch (polar residues) spans 56-70 (SGNSGSLATSGSQVV). The segment covering 72-91 (TEGKGAKRKAPEEEKNGGEE) has biased composition (basic and acidic residues). Residues 108-390 (KGYVAERKGE…DNVTVMVVRI (283 aa)) enclose the PPM-type phosphatase domain. Mn(2+)-binding residues include Asp152 and Gly153. Lys210 carries the post-translational modification N6-acetyllysine. Mn(2+) contacts are provided by Asp326 and Asp381.

This sequence belongs to the PP2C family. As to quaternary structure, interacts with ILK. It depends on Mg(2+) as a cofactor. Mn(2+) is required as a cofactor.

The protein localises to the cytoplasm. The catalysed reaction is O-phospho-L-seryl-[protein] + H2O = L-seryl-[protein] + phosphate. It carries out the reaction O-phospho-L-threonyl-[protein] + H2O = L-threonyl-[protein] + phosphate. In terms of biological role, protein phosphatase that may play a role in regulation of cell cycle progression via dephosphorylation of its substrates whose appropriate phosphorylation states might be crucial for cell proliferation. Selectively associates with integrin linked kinase (ILK), to modulate cell adhesion and growth factor signaling. Inhibits the ILK-GSK3B signaling axis and may play an important role in inhibiting oncogenic transformation. This Mus musculus (Mouse) protein is Integrin-linked kinase-associated serine/threonine phosphatase 2C (Ilkap).